We begin with the raw amino-acid sequence, 223 residues long: Protein Wnt-1 (223 aa).

3 disulfide bridges follow: C7-C24, C72-C86, and C74-C81. S78 carries the O-palmitoleoyl serine; by PORCN lipid modification. The tract at residues 110 to 135 (VTMRNDGSPSDRETESSFVPYNPSHK) is disordered. The segment covering 125 to 135 (SSFVPYNPSHK) has biased composition (polar residues). Cystine bridges form between C152-C183, C168-C178, C182-C222, C198-C213, C200-C210, and C205-C206. An N-linked (GlcNAc...) asparagine glycan is attached at N169.

Belongs to the Wnt family. Post-translationally, palmitoleoylation is required for efficient binding to frizzled receptors. Palmitoleoylation is necessary for proper trafficking to cell surface. Depalmitoleoylated by NOTUM, leading to inhibit Wnt signaling pathway.

The protein resides in the secreted. Its subcellular location is the extracellular space. It is found in the extracellular matrix. Its function is as follows. Ligand for members of the frizzled family of seven transmembrane receptors. Probable developmental protein. This Strongylocentrotus purpuratus (Purple sea urchin) protein is Protein Wnt-1 (WNT-1).